The primary structure comprises 378 residues: Tetraacyldisaccharide 4'-kinase (378 aa).

63–70 (AVGGAGKT) serves as a coordination point for ATP.

It belongs to the LpxK family.

It catalyses the reaction a lipid A disaccharide + ATP = a lipid IVA + ADP + H(+). It participates in glycolipid biosynthesis; lipid IV(A) biosynthesis; lipid IV(A) from (3R)-3-hydroxytetradecanoyl-[acyl-carrier-protein] and UDP-N-acetyl-alpha-D-glucosamine: step 6/6. Transfers the gamma-phosphate of ATP to the 4'-position of a tetraacyldisaccharide 1-phosphate intermediate (termed DS-1-P) to form tetraacyldisaccharide 1,4'-bis-phosphate (lipid IVA). This is Tetraacyldisaccharide 4'-kinase from Anaeromyxobacter dehalogenans (strain 2CP-C).